A 392-amino-acid polypeptide reads, in one-letter code: Protein DJ-1 homolog A (392 aa).

PfpI endopeptidase domains lie at 6 to 174 (KTVL…EQLF) and 212 to 378 (PQIL…EKFY).

Belongs to the peptidase C56 family. In terms of assembly, homodimer. Interacts with CSD1 and GPX2.

The protein resides in the cytoplasm. The protein localises to the cytosol. It localises to the nucleus. In terms of biological role, involved in oxidative stress response. Confers protection against diverse stresses by binding both CSD1 and GPX2 and mediating the cytosolic activation of the Cu-Zn-dependent superoxide dismutase activity of CSD1. This is Protein DJ-1 homolog A (DJ1A) from Arabidopsis thaliana (Mouse-ear cress).